Reading from the N-terminus, the 488-residue chain is Glutamyl-tRNA(Gln) amidotransferase subunit A (488 aa).

Catalysis depends on charge relay system residues K77 and S152. Residue S176 is the Acyl-ester intermediate of the active site.

It belongs to the amidase family. GatA subfamily. Heterotrimer of A, B and C subunits.

The enzyme catalyses L-glutamyl-tRNA(Gln) + L-glutamine + ATP + H2O = L-glutaminyl-tRNA(Gln) + L-glutamate + ADP + phosphate + H(+). Allows the formation of correctly charged Gln-tRNA(Gln) through the transamidation of misacylated Glu-tRNA(Gln) in organisms which lack glutaminyl-tRNA synthetase. The reaction takes place in the presence of glutamine and ATP through an activated gamma-phospho-Glu-tRNA(Gln). The protein is Glutamyl-tRNA(Gln) amidotransferase subunit A of Streptococcus suis (strain 05ZYH33).